A 750-amino-acid chain; its full sequence is Photosystem I P700 chlorophyll a apoprotein A1 (750 aa).

8 helical membrane passes run 70 to 93, 156 to 179, 195 to 219, 291 to 309, 346 to 369, 385 to 411, 433 to 455, and 531 to 549; these read VFSA…FHGA, LYCT…FHYH, LNHH…HVSL, IAHH…GHMY, WHAQ…HHMY, LSLF…IFMV, AIIS…LYIH, and FLVH…LILL. Positions 573 and 582 each coordinate [4Fe-4S] cluster. 2 consecutive transmembrane segments (helical) span residues 589–610 and 664–686; these read HVFL…HFSW and LSAY…MFLF. Residue H675 participates in chlorophyll a' binding. Residues M683 and Y691 each contribute to the chlorophyll a site. W692 serves as a coordination point for phylloquinone. The chain crosses the membrane as a helical span at residues 724–744; sequence AVGVTHYLLGGIATTWAFFLA.

It belongs to the PsaA/PsaB family. The PsaA/B heterodimer binds the P700 chlorophyll special pair and subsequent electron acceptors. PSI consists of a core antenna complex that captures photons, and an electron transfer chain that converts photonic excitation into a charge separation. The eukaryotic PSI reaction center is composed of at least 11 subunits. It depends on P700 is a chlorophyll a/chlorophyll a' dimer, A0 is one or more chlorophyll a, A1 is one or both phylloquinones and FX is a shared 4Fe-4S iron-sulfur center. as a cofactor.

It localises to the plastid. Its subcellular location is the chloroplast thylakoid membrane. It carries out the reaction reduced [plastocyanin] + hnu + oxidized [2Fe-2S]-[ferredoxin] = oxidized [plastocyanin] + reduced [2Fe-2S]-[ferredoxin]. Its function is as follows. PsaA and PsaB bind P700, the primary electron donor of photosystem I (PSI), as well as the electron acceptors A0, A1 and FX. PSI is a plastocyanin-ferredoxin oxidoreductase, converting photonic excitation into a charge separation, which transfers an electron from the donor P700 chlorophyll pair to the spectroscopically characterized acceptors A0, A1, FX, FA and FB in turn. Oxidized P700 is reduced on the lumenal side of the thylakoid membrane by plastocyanin. The polypeptide is Photosystem I P700 chlorophyll a apoprotein A1 (Draba nemorosa (Woodland whitlowgrass)).